Consider the following 827-residue polypeptide: Periplasmic nitrate reductase (827 aa).

Positions Met-1–Ala-32 form a signal peptide, tat-type signal. One can recognise a 4Fe-4S Mo/W bis-MGD-type domain in the interval Ile-37–Asp-93. Residues Cys-44, Cys-47, Cys-51, and Cys-79 each contribute to the [4Fe-4S] cluster site. Mo-bis(molybdopterin guanine dinucleotide) contacts are provided by residues Lys-81, Gln-148, Asn-173, Cys-177, Trp-210–Met-217, Ser-242–His-246, Gln-261–Asp-263, Met-372, Gln-376, Asn-482, Ser-508–Asp-509, Lys-531, Asp-558, and Thr-717–Thr-726. Substrate is bound at residue Phe-793. Asn-801 and Lys-818 together coordinate Mo-bis(molybdopterin guanine dinucleotide).

The protein belongs to the prokaryotic molybdopterin-containing oxidoreductase family. NasA/NapA/NarB subfamily. As to quaternary structure, component of the periplasmic nitrate reductase NapAB complex composed of NapA and NapB. [4Fe-4S] cluster is required as a cofactor. Mo-bis(molybdopterin guanine dinucleotide) serves as cofactor. Predicted to be exported by the Tat system. The position of the signal peptide cleavage has not been experimentally proven.

The protein resides in the periplasm. The catalysed reaction is 2 Fe(II)-[cytochrome] + nitrate + 2 H(+) = 2 Fe(III)-[cytochrome] + nitrite + H2O. Functionally, catalytic subunit of the periplasmic nitrate reductase complex NapAB. Receives electrons from NapB and catalyzes the reduction of nitrate to nitrite. This chain is Periplasmic nitrate reductase, found in Histophilus somni (strain 129Pt) (Haemophilus somnus).